The chain runs to 308 residues: HTH-type transcriptional activator AllS (308 aa).

Residues 2 to 59 (FDPETLRTFISVAETGSFSKAAERLCKTTATISYRIKLLEENTGVGLFFRTTRSVSLT) enclose the HTH lysR-type domain. Residues 19 to 38 (FSKAAERLCKTTATISYRIK) constitute a DNA-binding region (H-T-H motif).

Belongs to the LysR transcriptional regulatory family.

Functionally, positive regulator essential for the expression of allD operon. Binds to the allD promoter. This chain is HTH-type transcriptional activator AllS (allS), found in Salmonella paratyphi A (strain ATCC 9150 / SARB42).